Consider the following 434-residue polypeptide: MDYTKITRYTTGIDSILYKLIENCIDLRPTTYRLKILLHKAIELRNIEAVRLLLNNDVDPVAIDTHGITSLHTLTMPPNSSFIELDNWCSNTYTELLEVINRLNKSKTSYSFQRVELMRMIMDYCKDDEISKCLTISRMEPSRQIEEIQIMDILLSKGIDINFKDDIGNTALHYACDYRNGLNMVRHLIKNGADINIENDYGTTPLACAVSTRNIELVSILLDSGADPNSSSSSSIGTKVLHTAVGSGNFNIAKELIESGADPNIGDKAGVTPLHVAAIDEDSYALLELLLDNGADPNIKCSNGTTPLFQAMHNYNRVKLLFMYGADINIIDNQGNTPFTNLMSYDNEKLNSIIILQIMLIRKLFNDKMYYPAGLIKNLECIESHENLMNMAKRCEKLIKNKKSKDIVPDRISSELLDEEYDLDGWRSTSCSIS.

ANK repeat units lie at residues 33-62, 134-163, 167-197, 201-230, 236-265, 269-299, and 303-330; these read RLKILLHKAIELRNIEAVRLLLNNDVDPVA, LTISRMEPSRQIEEIQIMDILLSKGIDINF, IGNTALHYACDYRNGLNMVRHLIKNGADINI, YGTTPLACAVSTRNIELVSILLDSGADPNS, IGTKVLHTAVGSGNFNIAKELIESGADPNI, AGVTPLHVAAIDEDSYALLELLLDNGADPNI, and NGTTPLFQAMHNYNRVKLLFMYGADINI.

The sequence is that of Putative ankyrin repeat protein FPV023 from Fowlpox virus (strain NVSL) (FPV).